The primary structure comprises 494 residues: Probable 26S proteasome non-ATPase regulatory subunit 3 (494 aa).

The PCI domain maps to 247-426 (ARFLYYLGRI…NFMRSKESTD (180 aa)). Residues 458-494 (PPKSYGKDLESAEERREREQQDLELAKEMAEDDEDGF) are disordered. Residues 462–486 (YGKDLESAEERREREQQDLELAKEM) are compositionally biased toward basic and acidic residues.

It belongs to the proteasome subunit S3 family. As to quaternary structure, the 26S proteasome is composed of a core protease, known as the 20S proteasome, capped at one or both ends by the 19S regulatory complex (RC). The RC is composed of at least 18 different subunits in two subcomplexes, the base and the lid, which form the portions proximal and distal to the 20S proteolytic core, respectively. As to expression, blood (crystal) cells and cuticle.

Acts as a regulatory subunit of the 26 proteasome which is involved in the ATP-dependent degradation of ubiquitinated proteins. The sequence is that of Probable 26S proteasome non-ATPase regulatory subunit 3 (Rpn3) from Drosophila melanogaster (Fruit fly).